The primary structure comprises 85 residues: Probable Thioredoxin (85 aa).

The Glutaredoxin domain occupies 2–85 (VVKIEVFTSP…LFEAISDEIE (84 aa)). Cys13 and Cys16 are disulfide-bonded.

The protein belongs to the glutaredoxin family.

The protein resides in the cytoplasm. Its function is as follows. Does not function as a glutathione-disulfide oxidoreductase in the presence of glutathione and glutathione reductase. May be a component of a ribonucleotide-reducing system distinct from the previously described systems utilizing thioredoxin or glutaredoxin. The protein is Probable Thioredoxin of Methanothermobacter marburgensis (strain ATCC BAA-927 / DSM 2133 / JCM 14651 / NBRC 100331 / OCM 82 / Marburg) (Methanobacterium thermoautotrophicum).